The following is a 254-amino-acid chain: Triosephosphate isomerase (254 aa).

N10–K12 lines the substrate pocket. Residue H99 is the Electrophile of the active site. The active-site Proton acceptor is E169. Substrate is bound by residues G175, S215, and G236 to G237.

This sequence belongs to the triosephosphate isomerase family. As to quaternary structure, homodimer.

The protein localises to the cytoplasm. It catalyses the reaction D-glyceraldehyde 3-phosphate = dihydroxyacetone phosphate. Its pathway is carbohydrate biosynthesis; gluconeogenesis. It participates in carbohydrate degradation; glycolysis; D-glyceraldehyde 3-phosphate from glycerone phosphate: step 1/1. Functionally, involved in the gluconeogenesis. Catalyzes stereospecifically the conversion of dihydroxyacetone phosphate (DHAP) to D-glyceraldehyde-3-phosphate (G3P). This chain is Triosephosphate isomerase, found in Chlamydia abortus (strain DSM 27085 / S26/3) (Chlamydophila abortus).